Here is a 337-residue protein sequence, read N- to C-terminus: Phosphoribosylformylglycinamidine cyclo-ligase (337 aa).

It belongs to the AIR synthase family.

The protein resides in the cytoplasm. It carries out the reaction 2-formamido-N(1)-(5-O-phospho-beta-D-ribosyl)acetamidine + ATP = 5-amino-1-(5-phospho-beta-D-ribosyl)imidazole + ADP + phosphate + H(+). It participates in purine metabolism; IMP biosynthesis via de novo pathway; 5-amino-1-(5-phospho-D-ribosyl)imidazole from N(2)-formyl-N(1)-(5-phospho-D-ribosyl)glycinamide: step 2/2. The chain is Phosphoribosylformylglycinamidine cyclo-ligase from Gloeobacter violaceus (strain ATCC 29082 / PCC 7421).